The sequence spans 485 residues: GlcNAc-binding protein A (485 aa).

Residues 1-29 form the signal peptide; that stretch reads MKKQPQKTLLAIALSVVSGTAMSHGYVSA. Residues 30 to 200 form the Chitin-binding type-4 domain; the sequence is VENGVAEARV…SFYNVIDVKF (171 aa). The 42-residue stretch at 437 to 478 folds into the Chitin-binding type-3 domain; it reads ADTKVLASDGAIYQCKPFPYSGYCVQWTPTATQYQPGTGSHW.

Belongs to the GbpA family.

It is found in the secreted. Functionally, probably interacts with GlcNAc residues. May promote attachment to both epithelial cell surfaces and chitin. The chain is GlcNAc-binding protein A from Vibrio vulnificus (strain CMCP6).